The following is a 231-amino-acid chain: Large ribosomal subunit protein uL1 (231 aa).

It belongs to the universal ribosomal protein uL1 family. As to quaternary structure, part of the 50S ribosomal subunit.

Its function is as follows. Binds directly to 23S rRNA. The L1 stalk is quite mobile in the ribosome, and is involved in E site tRNA release. Functionally, protein L1 is also a translational repressor protein, it controls the translation of the L11 operon by binding to its mRNA. The sequence is that of Large ribosomal subunit protein uL1 from Macrococcus caseolyticus (strain JCSC5402) (Macrococcoides caseolyticum).